Here is a 202-residue protein sequence, read N- to C-terminus: Probable GTP-binding protein EngB (202 aa).

Positions 22 to 197 (VFPEYAFIGR…LDYIENISKE (176 aa)) constitute an EngB-type G domain. Residues 30–37 (GRSNVGKS), 57–61 (GKTML), 75–78 (DLPG), 142–145 (TKAD), and 173–178 (YFISSS) contribute to the GTP site. Residues S37 and T59 each contribute to the Mg(2+) site.

The protein belongs to the TRAFAC class TrmE-Era-EngA-EngB-Septin-like GTPase superfamily. EngB GTPase family. Requires Mg(2+) as cofactor.

In terms of biological role, necessary for normal cell division and for the maintenance of normal septation. This chain is Probable GTP-binding protein EngB, found in Bacteroides thetaiotaomicron (strain ATCC 29148 / DSM 2079 / JCM 5827 / CCUG 10774 / NCTC 10582 / VPI-5482 / E50).